The sequence spans 414 residues: Dothistromin biosynthesis peroxidase dotB (414 aa).

The N-terminal stretch at M1–A18 is a signal peptide. C72 is a binding site for heme. 3 N-linked (GlcNAc...) asparagine glycosylation sites follow: N187, N241, and N328.

It belongs to the chloroperoxidase family. The cofactor is heme b.

Its pathway is mycotoxin biosynthesis. In terms of biological role, peroxidase; part of the fragmented gene cluster that mediates the biosynthesis of dothistromin (DOTH), a polyketide toxin very similar in structure to the aflatoxin precursor, versicolorin B. The first step of the pathway is the conversion of acetate to norsolorinic acid (NOR) and requires the fatty acid synthase subunits hexA and hexB, as well as the polyketide synthase pksA. PksA combines a hexanoyl starter unit and 7 malonyl-CoA extender units to synthesize the precursor NOR. The hexanoyl starter unit is provided to the acyl-carrier protein (ACP) domain by the fungal fatty acid synthase hexA/hexB. The second step is the conversion of NOR to averantin (AVN) and requires the norsolorinic acid ketoreductase nor1, which catalyzes the dehydration of norsolorinic acid to form (1'S)-averantin. The cytochrome P450 monooxygenase avnA then catalyzes the hydroxylation of AVN to 5'hydroxyaverantin (HAVN). The next step is performed by adhA that transforms HAVN to averufin (AVF). Averufin might then be converted to hydroxyversicolorone by cypX and avfA. Hydroxyversicolorone is further converted versiconal hemiacetal acetate (VHA) by moxY. VHA is then the substrate for the versiconal hemiacetal acetate esterase est1 to yield versiconal (VAL). Versicolorin B synthase vbsA then converts VAL to versicolorin B (VERB) by closing the bisfuran ring. Then, the activity of the versicolorin B desaturase verB leads to versicolorin A (VERA). DotB, a predicted chloroperoxidase, may perform epoxidation of the A-ring of VERA. Alternatively, a cytochrome P450, such as cypX or avnA could catalyze this step. It is also possible that another, uncharacterized, cytochrome P450 enzyme is responsible for this step. Opening of the epoxide could potentially be achieved by the epoxide hydrolase epoA. However, epoA seems not to be required for DOTH biosynthesis, but other epoxide hydrolases may have the ability to complement this hydrolysis. Alternatively, opening of the epoxide ring could be achieved non-enzymatically. The next step is the deoxygenation of ring A to yield the 5,8-dihydroxyanthraquinone which is most likely catalyzed by the NADPH dehydrogenase encoded by ver1. The last stages of DOTH biosynthesis are proposed to involve hydroxylation of the bisfuran. OrdB and norB might have oxidative roles here. An alternative possibility is that cytochrome P450 monoogenases such as avnA and cypX might perform these steps in addition to previously proposed steps. In Dothistroma septosporum (Red band needle blight fungus), this protein is Dothistromin biosynthesis peroxidase dotB.